Consider the following 159-residue polypeptide: ATP synthase subunit b (159 aa).

The chain crosses the membrane as a helical span at residues 4–24 (VGINGTLIVQLVTFVILVALL).

It belongs to the ATPase B chain family. F-type ATPases have 2 components, F(1) - the catalytic core - and F(0) - the membrane proton channel. F(1) has five subunits: alpha(3), beta(3), gamma(1), delta(1), epsilon(1). F(0) has three main subunits: a(1), b(2) and c(10-14). The alpha and beta chains form an alternating ring which encloses part of the gamma chain. F(1) is attached to F(0) by a central stalk formed by the gamma and epsilon chains, while a peripheral stalk is formed by the delta and b chains.

It localises to the cell inner membrane. In terms of biological role, f(1)F(0) ATP synthase produces ATP from ADP in the presence of a proton or sodium gradient. F-type ATPases consist of two structural domains, F(1) containing the extramembraneous catalytic core and F(0) containing the membrane proton channel, linked together by a central stalk and a peripheral stalk. During catalysis, ATP synthesis in the catalytic domain of F(1) is coupled via a rotary mechanism of the central stalk subunits to proton translocation. Component of the F(0) channel, it forms part of the peripheral stalk, linking F(1) to F(0). The protein is ATP synthase subunit b of Acidithiobacillus ferridurans.